The following is a 213-amino-acid chain: A-type ATP synthase subunit D (213 aa).

This sequence belongs to the V-ATPase D subunit family. As to quaternary structure, has multiple subunits with at least A(3), B(3), C, D, E, F, H, I and proteolipid K(x).

The protein localises to the cell membrane. In terms of biological role, component of the A-type ATP synthase that produces ATP from ADP in the presence of a proton gradient across the membrane. The chain is A-type ATP synthase subunit D from Saccharolobus solfataricus (strain ATCC 35092 / DSM 1617 / JCM 11322 / P2) (Sulfolobus solfataricus).